The sequence spans 185 residues: Large ribosomal subunit protein uL5 (185 aa).

It belongs to the universal ribosomal protein uL5 family. In terms of assembly, part of the 50S ribosomal subunit; part of the 5S rRNA/L5/L18/L25 subcomplex. Contacts the 5S rRNA and the P site tRNA. Forms a bridge to the 30S subunit in the 70S ribosome.

Its function is as follows. This is one of the proteins that bind and probably mediate the attachment of the 5S RNA into the large ribosomal subunit, where it forms part of the central protuberance. In the 70S ribosome it contacts protein S13 of the 30S subunit (bridge B1b), connecting the 2 subunits; this bridge is implicated in subunit movement. Contacts the P site tRNA; the 5S rRNA and some of its associated proteins might help stabilize positioning of ribosome-bound tRNAs. The protein is Large ribosomal subunit protein uL5 of Bradyrhizobium sp. (strain BTAi1 / ATCC BAA-1182).